We begin with the raw amino-acid sequence, 278 residues long: Large ribosomal subunit protein uL2 (278 aa).

The tract at residues 222–278 (GVVMNPVDHPHGGGEGRTSGGRHPVTPWGKPTKGAKTRKNKSTDKFIIRSRHERKKR) is disordered. Basic residues predominate over residues 269–278 (IRSRHERKKR).

This sequence belongs to the universal ribosomal protein uL2 family. As to quaternary structure, part of the 50S ribosomal subunit. Forms a bridge to the 30S subunit in the 70S ribosome.

Its function is as follows. One of the primary rRNA binding proteins. Required for association of the 30S and 50S subunits to form the 70S ribosome, for tRNA binding and peptide bond formation. It has been suggested to have peptidyltransferase activity; this is somewhat controversial. Makes several contacts with the 16S rRNA in the 70S ribosome. This is Large ribosomal subunit protein uL2 from Maricaulis maris (strain MCS10) (Caulobacter maris).